Here is a 182-residue protein sequence, read N- to C-terminus: Dirigent protein 1 (182 aa).

Residues 1–24 form the signal peptide; that stretch reads MAKRFLLLLPLLSSILLLAVSVTA. The N-linked (GlcNAc...) asparagine glycan is linked to asparagine 125.

It belongs to the plant dirigent protein family. As to quaternary structure, homodimer.

The protein localises to the secreted. It is found in the extracellular space. The protein resides in the apoplast. In terms of biological role, dirigent proteins impart stereoselectivity on the phenoxy radical-coupling reaction, yielding optically active lignans from two molecules of coniferyl alcohol in the biosynthesis of lignans, flavonolignans, and alkaloids and thus plays a central role in plant secondary metabolism. The sequence is that of Dirigent protein 1 (DIR1) from Arabidopsis thaliana (Mouse-ear cress).